A 360-amino-acid polypeptide reads, in one-letter code: Photosystem II protein D1 (360 aa).

At 1–28 (MTTTLQRRESANLWERFCNWVTSTDNRL) the chain is on the cytoplasmic side. The chain crosses the membrane as a helical span at residues 29–46 (YVGWFGVIMIPTLLAATI). At 47–117 (CFVIAFIAAP…NGGPYQLIIF (71 aa)) the chain is on the lumenal side. His-118 lines the chlorophyll a pocket. A helical membrane pass occupies residues 118–133 (HFLLGASCYMGRQWEL). Residues Tyr-126 and Gln-130 each coordinate pheophytin a. Over 134–141 (SYRLGMRP) the chain is Cytoplasmic. Residues 142–156 (WICVAYSAPLASAFA) form a helical membrane-spanning segment. Tyr-147 is a binding site for pheophytin a. Topologically, residues 157-196 (VFLIYPIGQGSFSDGMPLGISGTFNFMIVFQAEHNILMHP) are lumenal. 2 residues coordinate [CaMn4O5] cluster: Asp-170 and Glu-189. Residues 197-218 (FHQLGVAGVFGGALFCAMHGSL) traverse the membrane as a helical segment. His-198 lines the chlorophyll a pocket. Residue Met-214 participates in pheophytin a binding. A quinone-binding positions include His-215 and 264–265 (SF). Position 215 (His-215) interacts with Fe cation. Residues 219–273 (VTSSLIRETTETESANYGYKFGQEEETYNIVAAHGYFGRLIFQYASFNNSRSLHF) are Cytoplasmic-facing. Residue His-272 coordinates Fe cation. A helical membrane pass occupies residues 274–288 (FLAAWRVVGVWFAAL). The Lumenal segment spans residues 289-360 (GISTMAFNLN…VAMIAPSING (72 aa)). [CaMn4O5] cluster-binding residues include His-332, Glu-333, Asp-342, and Ala-344. The propeptide occupies 345–360 (SAESAPVAMIAPSING).

It belongs to the reaction center PufL/M/PsbA/D family. In terms of assembly, PSII is composed of 1 copy each of membrane proteins PsbA, PsbB, PsbC, PsbD, PsbE, PsbF, PsbH, PsbI, PsbJ, PsbK, PsbL, PsbM, PsbT, PsbX, PsbY, PsbZ, Psb30/Ycf12, peripheral proteins PsbO, CyanoQ (PsbQ), PsbU, PsbV and a large number of cofactors. It forms dimeric complexes. The D1/D2 heterodimer binds P680, chlorophylls that are the primary electron donor of PSII, and subsequent electron acceptors. It shares a non-heme iron and each subunit binds pheophytin, quinone, additional chlorophylls, carotenoids and lipids. D1 provides most of the ligands for the Mn4-Ca-O5 cluster of the oxygen-evolving complex (OEC). There is also a Cl(-1) ion associated with D1 and D2, which is required for oxygen evolution. The PSII complex binds additional chlorophylls, carotenoids and specific lipids. is required as a cofactor. Post-translationally, C-terminally processed by CtpA; processing is essential to allow assembly of the oxygen-evolving complex and thus photosynthetic growth. In terms of processing, tyr-161 forms a radical intermediate that is referred to as redox-active TyrZ, YZ or Y-Z.

Its subcellular location is the cellular thylakoid membrane. It catalyses the reaction 2 a plastoquinone + 4 hnu + 2 H2O = 2 a plastoquinol + O2. Photosystem II (PSII) is a light-driven water:plastoquinone oxidoreductase that uses light energy to abstract electrons from H(2)O, generating O(2) and a proton gradient subsequently used for ATP formation. It consists of a core antenna complex that captures photons, and an electron transfer chain that converts photonic excitation into a charge separation. The D1/D2 (PsbA/PsbD) reaction center heterodimer binds P680, the primary electron donor of PSII as well as several subsequent electron acceptors. This Thermostichus vulcanus (Synechococcus vulcanus) protein is Photosystem II protein D1.